The sequence spans 104 residues: MMLKPSIDTLLDKVPSKYSLVILEAKRAHELEAGAKPTQEFTSVKSTLRALEEIESGNVVIHPDPEAKREAVRRRAEEAKRLAEEEERKIKAQIAKEKEEGEKI.

The protein belongs to the RNA polymerase subunit omega family. As to quaternary structure, the RNAP catalytic core consists of 2 alpha, 1 beta, 1 beta' and 1 omega subunit. When a sigma factor is associated with the core the holoenzyme is formed, which can initiate transcription.

It carries out the reaction RNA(n) + a ribonucleoside 5'-triphosphate = RNA(n+1) + diphosphate. Its function is as follows. Promotes RNA polymerase assembly. Latches the N- and C-terminal regions of the beta' subunit thereby facilitating its interaction with the beta and alpha subunits. This is DNA-directed RNA polymerase subunit omega from Streptococcus suis (strain 05ZYH33).